A 3933-amino-acid polypeptide reads, in one-letter code: Circularly permutated Ras protein 2 (3933 aa).

A coiled-coil region spans residues 12-46 (VHEVKKQELESILLQQEQEKQAKEEKESIKDTDDK). Disordered regions lie at residues 23 to 101 (ILLQ…IEKK), 136 to 189 (DIRE…RKET), 1022 to 1054 (ITTTTTTTTTNNNNNNNEVGESTTPNLPITTTT), and 2817 to 2839 (NNNNNNNRYNTPVRNGNIGRPTR). Over residues 28–62 (EQEKQAKEEKESIKDTDDKPIEDTEHSTNNDKPIE) the composition is skewed to basic and acidic residues. Positions 70 to 92 (TPTTTTTTKPTDEASSSSNNNNN) are enriched in low complexity. The span at 136-145 (DIREPTDKPF) shows a compositional bias: basic and acidic residues. Positions 146 to 156 (ENTSNIETTRQ) are enriched in polar residues. Residues 167 to 215 (KTEAERLEQEQKQKQYDENRKETDRKLELELERLKNKKEEVEQIRAYFQ) adopt a coiled-coil conformation. A compositionally biased stretch (basic and acidic residues) spans 168–189 (TEAERLEQEQKQKQYDENRKET). Residues 2817 to 2826 (NNNNNNNRYN) show a composition bias toward low complexity. Residues 2853-2857 (DTAGQ), 2913-2916 (TKAD), and 2976-2983 (GDGGIGKS) each bind GTP. 3 disordered regions span residues 3036-3086 (LQSA…LSSR), 3107-3142 (RKSSLVEEESKRQYDDDDESKSESSEYDDDDDQDYE), and 3733-3754 (VIEPSSNVDENSEKVETQPSSS). Low complexity predominate over residues 3070–3086 (PSSSSTRTSVSTSLSSR). Basic and acidic residues predominate over residues 3107 to 3120 (RKSSLVEEESKRQY). Residues 3121-3141 (DDDDESKSESSEYDDDDDQDY) are compositionally biased toward acidic residues.

This sequence belongs to the small GTPase superfamily. CpRas family.

This chain is Circularly permutated Ras protein 2 (cpras2), found in Dictyostelium discoideum (Social amoeba).